The following is a 76-amino-acid chain: DNA-directed RNA polymerase subunit Rpo5 (76 aa).

Belongs to the archaeal Rpo5/eukaryotic RPB5 RNA polymerase subunit family. As to quaternary structure, part of the RNA polymerase complex.

The protein localises to the cytoplasm. It catalyses the reaction RNA(n) + a ribonucleoside 5'-triphosphate = RNA(n+1) + diphosphate. Its function is as follows. DNA-dependent RNA polymerase (RNAP) catalyzes the transcription of DNA into RNA using the four ribonucleoside triphosphates as substrates. The chain is DNA-directed RNA polymerase subunit Rpo5 from Archaeoglobus fulgidus (strain ATCC 49558 / DSM 4304 / JCM 9628 / NBRC 100126 / VC-16).